The primary structure comprises 562 residues: Nucleoprotein (562 aa).

The interval 53–238 is binding site for the cap structure m7GTP; the sequence is MRRDKRDESD…ITQEESQINI (186 aa). Mn(2+) contacts are provided by D381 and E383. Residues E391, C498, H501, and C522 each contribute to the Zn(2+) site. Mn(2+) is bound at residue D526.

This sequence belongs to the arenaviridae nucleocapsid protein family. In terms of assembly, homomultimerizes to form the nucleocapsid. Binds to viral genomic RNA. Interacts with glycoprotein G2. Interacts with protein Z; this interaction probably directs the encapsidated genome to budding sites. Interacts with protein L; this interaction does not interfere with Z-L interaction. Interacts with host IKBKE (via Protein kinase domain); the interaction inhibits IKBKE kinase activity.

The protein resides in the virion. Its subcellular location is the host cytoplasm. In terms of biological role, encapsidates the genome, protecting it from nucleases. The encapsidated genomic RNA is termed the nucleocapsid (NC). Serves as template for viral transcription and replication. The increased presence of protein N in host cell does not seem to trigger the switch from transcription to replication as observed in other negative strain RNA viruses. Through the interaction with host IKBKE, strongly inhibits the phosphorylation and nuclear translocation of host IRF3, a protein involved in interferon activation pathway, leading to the inhibition of interferon-beta and IRF3-dependent promoters activation. Also encodes a functional 3'-5' exoribonuclease that degrades preferentially dsRNA substrates and thereby participates in the suppression of interferon induction. This is Nucleoprotein from Bear Canyon mammarenavirus (isolate Mouse/United States/AV A0070039/2000) (BCNV).